The primary structure comprises 450 residues: Glutamyl-tRNA reductase (450 aa).

Substrate is bound by residues 45 to 48, S107, 112 to 114, and Q118; these read TCNR and ERE. C46 functions as the Nucleophile in the catalytic mechanism. 196–201 lines the NADP(+) pocket; the sequence is GTGAYA.

Belongs to the glutamyl-tRNA reductase family. Homodimer.

It catalyses the reaction (S)-4-amino-5-oxopentanoate + tRNA(Glu) + NADP(+) = L-glutamyl-tRNA(Glu) + NADPH + H(+). The protein operates within porphyrin-containing compound metabolism; protoporphyrin-IX biosynthesis; 5-aminolevulinate from L-glutamyl-tRNA(Glu): step 1/2. In terms of biological role, catalyzes the NADPH-dependent reduction of glutamyl-tRNA(Glu) to glutamate 1-semialdehyde (GSA). The protein is Glutamyl-tRNA reductase of Micrococcus luteus (strain ATCC 4698 / DSM 20030 / JCM 1464 / CCM 169 / CCUG 5858 / IAM 1056 / NBRC 3333 / NCIMB 9278 / NCTC 2665 / VKM Ac-2230) (Micrococcus lysodeikticus).